Reading from the N-terminus, the 432-residue chain is Adenylosuccinate synthetase (432 aa).

Residues 13-19 (GDEGKGK) and 41-43 (GHT) contribute to the GTP site. Asp14 (proton acceptor) is an active-site residue. Positions 14 and 41 each coordinate Mg(2+). IMP is bound by residues 14 to 17 (DEGK), 39 to 42 (NAGH), Thr130, Arg144, Gln225, Thr240, and Arg304. His42 (proton donor) is an active-site residue. Residue 300-306 (STTGRRR) coordinates substrate. GTP is bound by residues Arg306, 332-334 (KID), and 415-417 (STG).

It belongs to the adenylosuccinate synthetase family. Homodimer. Mg(2+) serves as cofactor.

It localises to the cytoplasm. It catalyses the reaction IMP + L-aspartate + GTP = N(6)-(1,2-dicarboxyethyl)-AMP + GDP + phosphate + 2 H(+). Its pathway is purine metabolism; AMP biosynthesis via de novo pathway; AMP from IMP: step 1/2. Functionally, plays an important role in the de novo pathway of purine nucleotide biosynthesis. Catalyzes the first committed step in the biosynthesis of AMP from IMP. In Blochmanniella pennsylvanica (strain BPEN), this protein is Adenylosuccinate synthetase.